The following is a 213-amino-acid chain: Histone H1.3 (213 aa).

The residue at position 1 (Ser1) is an N-acetylserine. Positions 1–15 (SEAPAETAAPAPAEK) are enriched in low complexity. The interval 1 to 41 (SEAPAETAAPAPAEKSPAKKKKAAKKPGAGAAKRKAAGPPV) is disordered. N6-acetyllysine is present on Lys15. An N6-(beta-hydroxybutyryl)lysine mark is found at Lys35 and Lys53. The region spanning 37-110 (AGPPVSELIT…GASGSFKLDK (74 aa)) is the H15 domain. The residue at position 55 (Arg55) is a Citrulline. An N6-(beta-hydroxybutyryl)lysine mark is found at Lys65, Lys86, and Lys91. The interval 92–213 (GTLVETKGTG…AKKTAAKKKK (122 aa)) is disordered. Residue Ser105 is modified to Phosphoserine. N6-(beta-hydroxybutyryl)lysine is present on Lys107. The span at 107-119 (KLDKKAASGEAKP) shows a compositional bias: basic and acidic residues. 3 stretches are compositionally biased toward basic residues: residues 120–131 (KPKKAGAAKPKK), 138–170 (KKPK…KVAK), and 179–213 (KSPK…KKKK).

It belongs to the histone H1/H5 family. Post-translationally, H1 histones are progressively phosphorylated during the cell cycle, becoming maximally phosphorylated during late G2 phase and M phase, and being dephosphorylated sharply thereafter. Citrullination at Arg-55 (H1R54ci) by PADI4 takes place within the DNA-binding site of H1 and results in its displacement from chromatin and global chromatin decondensation, thereby promoting pluripotency and stem cell maintenance.

It localises to the nucleus. Its subcellular location is the chromosome. In terms of biological role, histones H1 are necessary for the condensation of nucleosome chains into higher-order structures. This chain is Histone H1.3, found in Oryctolagus cuniculus (Rabbit).